The chain runs to 426 residues: 3-phosphoshikimate 1-carboxyvinyltransferase (426 aa).

Residues Lys-22, Ser-23, and Arg-27 each contribute to the 3-phosphoshikimate site. Lys-22 is a phosphoenolpyruvate binding site. 2 residues coordinate phosphoenolpyruvate: Gly-96 and Arg-124. 3-phosphoshikimate-binding residues include Ser-170, Ser-171, Gln-172, Ser-198, Asp-314, Asn-337, and Lys-341. Phosphoenolpyruvate is bound at residue Gln-172. Asp-314 acts as the Proton acceptor in catalysis. The phosphoenolpyruvate site is built by Arg-345, Arg-387, and Lys-412.

The protein belongs to the EPSP synthase family. As to quaternary structure, monomer.

The protein resides in the cytoplasm. It catalyses the reaction 3-phosphoshikimate + phosphoenolpyruvate = 5-O-(1-carboxyvinyl)-3-phosphoshikimate + phosphate. Its pathway is metabolic intermediate biosynthesis; chorismate biosynthesis; chorismate from D-erythrose 4-phosphate and phosphoenolpyruvate: step 6/7. Functionally, catalyzes the transfer of the enolpyruvyl moiety of phosphoenolpyruvate (PEP) to the 5-hydroxyl of shikimate-3-phosphate (S3P) to produce enolpyruvyl shikimate-3-phosphate and inorganic phosphate. The chain is 3-phosphoshikimate 1-carboxyvinyltransferase from Vibrio atlanticus (strain LGP32) (Vibrio splendidus (strain Mel32)).